Reading from the N-terminus, the 941-residue chain is Pre-mRNA-processing factor 6 (941 aa).

The tract at residues 1–79 is disordered; it reads MNKKKKPFLG…DEDLNDTNYD (79 aa). Residues 39-65 are compositionally biased toward basic and acidic residues; the sequence is DANDPVDDRHAPPGKRTVGDQMKKNQA. Residues 66 to 78 show a composition bias toward acidic residues; sequence ADDDDEDLNDTNY. S143 carries the post-translational modification Phosphoserine. T180, T266, and T275 each carry phosphothreonine. S279 carries the post-translational modification Phosphoserine. 9 HAT repeats span residues 384–416, 418–444, 445–476, 554–586, 588–620, 622–654, 689–721, 723–755, and 855–887; these read TDIR…LEEP, DARI…ARLE, TYEN…LEEA, NALE…FGKN, GTRE…SKWL, GDVP…LESE, DNIR…IEEQ, EMME…LEEK, and RKIT…FELQ.

Identified in the spliceosome B complex. Identified in the spliceosome C complex. Associates with the U5 snRNP particle. Component of the U4/U6-U5 tri-snRNP complex composed of the U4, U6 and U5 snRNAs and at least PRPF3, PRPF4, PRPF6, PRPF8, PRPF31, SNRNP200, TXNL4A, SNRNP40, DDX23, CD2BP2, PPIH, SNU13, EFTUD2, SART1 and USP39, LSm proteins LSm2-8 and Sm proteins. Interacts with ARAF1. Interacts with AR and NR3C1, but not ESR1, independently of the presence of hormones. Interacts with USH1G. In terms of processing, phosphorylated by PRP4K during spliceosome assembly.

Its subcellular location is the nucleus. The protein resides in the nucleoplasm. It localises to the nucleus speckle. Functionally, involved in pre-mRNA splicing as component of the U4/U6-U5 tri-snRNP complex, one of the building blocks of the spliceosome. Enhances dihydrotestosterone-induced transactivation activity of AR, as well as dexamethasone-induced transactivation activity of NR3C1, but does not affect estrogen-induced transactivation. This Pongo abelii (Sumatran orangutan) protein is Pre-mRNA-processing factor 6 (PRPF6).